Consider the following 1076-residue polypeptide: Cytadherence high molecular weight protein 3 (1076 aa).

A fibronectin-binding region spans residues 264–284 (QGYDQGYDQQYDQQGYDQQGY). Over residues 326–335 (QQPVEVAKPA) the composition is skewed to low complexity. A disordered region spans residues 326–351 (QQPVEVAKPAPTKPVGPKPQPGKKAT). Residues 336-345 (PTKPVGPKPQ) are compositionally biased toward pro residues. The stretch at 562-616 (EITKLEELVEIKTDNTESLNKLETLIDENKKIIDQFKQLKEEAKKSNSNINLEKV) forms a coiled coil. Disordered stretches follow at residues 789–808 (SREH…TTRI) and 850–873 (RINP…EQQP). The span at 797-806 (PKAQHQQPTT) shows a compositional bias: polar residues. Residues 862 to 873 (YEQPDPYQEQQP) are compositionally biased toward low complexity.

It localises to the cell projection. It is found in the attachment organelle membrane. In terms of biological role, binds immobilized fibronectin. Functionally, component of the cytoskeleton-like structure which stabilizes the shape of the wall-less mycoplasma. This cytoskeleton-like network of accessory proteins containing HMW proteins 1 to 5 allows the proper anchoring of cytadhesin proteins in the mycoplasmal membrane at the attachment organelle. Essential for successful surface parasitism. The protein is Cytadherence high molecular weight protein 3 (hlp3) of Mycoplasmoides gallisepticum (strain R(low / passage 15 / clone 2)) (Mycoplasma gallisepticum).